Here is a 540-residue protein sequence, read N- to C-terminus: GMP synthase [glutamine-hydrolyzing] (540 aa).

The 194-residue stretch at 29 to 222 (KILIVDFGSQ…VRKVAGLTGD (194 aa)) folds into the Glutamine amidotransferase type-1 domain. Cys-106 serves as the catalytic Nucleophile. Active-site residues include His-196 and Glu-198. The GMPS ATP-PPase domain maps to 223-415 (WTMRAFREEA…LGLPDVFVGR (193 aa)). Position 250–256 (250–256 (SGGVDSA)) interacts with ATP.

Homodimer.

The enzyme catalyses XMP + L-glutamine + ATP + H2O = GMP + L-glutamate + AMP + diphosphate + 2 H(+). Its pathway is purine metabolism; GMP biosynthesis; GMP from XMP (L-Gln route): step 1/1. In terms of biological role, catalyzes the synthesis of GMP from XMP. The protein is GMP synthase [glutamine-hydrolyzing] of Rhodopseudomonas palustris (strain ATCC BAA-98 / CGA009).